Here is a 579-residue protein sequence, read N- to C-terminus: XK-related protein 7 (579 aa).

Residues M1–G18 are compositionally biased toward low complexity. The interval M1–P40 is disordered. Residues A19 to G31 are compositionally biased toward gly residues. Transmembrane regions (helical) follow at residues W59–A79 and Y89–F109. The segment at G146–S165 is disordered. 5 consecutive transmembrane segments (helical) span residues L260–Y280, G314–A334, W355–V375, M384–S404, and L415–Y435. The segment at A466–T510 is disordered.

The protein belongs to the XK family.

The protein resides in the cell membrane. This Homo sapiens (Human) protein is XK-related protein 7.